The following is a 432-amino-acid chain: Phytase AppA (432 aa).

The N-terminal stretch at 1–22 (MKAILIPFLSLLIPLTPQSAFA) is a signal peptide. Residue R38 participates in 1D-myo-inositol hexakisphosphate binding. Catalysis depends on H39, which acts as the Nucleophile. 1D-myo-inositol hexakisphosphate contacts are provided by residues 42-46 (RAPTK) and R114. 4 cysteine pairs are disulfide-bonded: C99/C130, C155/C430, C200/C210, and C404/C413. Residues R289 and 325–327 (HDT) each bind 1D-myo-inositol hexakisphosphate. D326 acts as the Proton donor in catalysis.

It belongs to the histidine acid phosphatase family. Monomer.

It is found in the periplasm. The catalysed reaction is 1D-myo-inositol hexakisphosphate + H2O = 1D-myo-inositol 1,2,3,4,5-pentakisphosphate + phosphate. The enzyme catalyses 1D-myo-inositol 1,2,3,4,5-pentakisphosphate + H2O = 1D-myo-inositol 2,3,4,5-tetrakisphosphate + phosphate. It catalyses the reaction 1D-myo-inositol 2,3,4,5-tetrakisphosphate + H2O = 1D-myo-inositol 2,4,5-triphosphate + phosphate. It carries out the reaction 1D-myo-inositol 2,4,5-triphosphate + H2O = 1D-myo-inositol 2,5-bisphosphate + phosphate. The catalysed reaction is 1D-myo-inositol 2,5-bisphosphate + H2O = 1D-myo-inositol 2-phosphate + phosphate. The enzyme catalyses GTP + H2O = GDP + phosphate + H(+). With respect to regulation, contains three consecutive and one non-consecutive disulfide bonds and shows a strong dependence on DsbC for its full activity. Competitively inhibited by tartaric acid and by sodium fluorid. Catalyzes the hydrolysis of phytate (or myo-inositol hexakisphosphate, an indigestible organic form of phosphorus that is found in many plant tissues) to myo-inositol and inorganic phosphate. Dephosphorylates phytate in a stereospecific way by sequential removal of phosphate groups to produce myo-inositol 2-monophosphate. Also shows phosphoanhydride phosphatase activity and hydrolyzes the distal phosphoryl residues of GTP, the 5'-beta-phosphoryl residue of the regulatory nucleotide ppGpp and tripolyphosphates. Does not split most phosphomonoesters with the exception of the synthetic substrate p-nitrophenyl phosphate (pNPP), 2,3-bisphosphoglycerate and fructose 1,6-bisphosphate. In Escherichia coli (strain K12), this protein is Phytase AppA.